Consider the following 255-residue polypeptide: MNKLLIIDGLNLVRRIHAVLPDENDIASVQERVLAASKKMLLQHQPTHCMVVWDGNEPSWRKTLYSDYKKGRKPMPTALSDGLVNIKATLAEHDINSFDAQSEADDVIATIAMKMISNKGEVIIVSTDKGFSQLPTKNLTLWDHFNQQVFDVEQYEKKLGIEQYQMLDFIALAGDSGNKIPGIMGIGPKSAADLLNKFRTLANLYRSLDNLGAKQALKLAEGKEIARISYKLAQLQCDIPLNINLKQFRINPITN.

D105 serves as a coordination point for Mg(2+). Residues 163–253 enclose the 5'-3' exonuclease domain; it reads QYQMLDFIAL…NLKQFRINPI (91 aa). K(+) contacts are provided by L172, A173, P181, I183, and I186. The tract at residues 185-190 is interaction with DNA; it reads GIGPKS.

The protein belongs to the Xni family. It depends on Mg(2+) as a cofactor. The cofactor is K(+).

Functionally, has flap endonuclease activity. During DNA replication, flap endonucleases cleave the 5'-overhanging flap structure that is generated by displacement synthesis when DNA polymerase encounters the 5'-end of a downstream Okazaki fragment. In Shewanella frigidimarina (strain NCIMB 400), this protein is Flap endonuclease Xni.